A 119-amino-acid polypeptide reads, in one-letter code: Integration host factor subunit beta (119 aa).

Positions 91–119 are disordered; the sequence is DLVGNDQGDDSSNGSSDPLQSVMDMHAMH. Low complexity predominate over residues 94–107; sequence GNDQGDDSSNGSSD.

Belongs to the bacterial histone-like protein family. In terms of assembly, heterodimer of an alpha and a beta chain.

Its function is as follows. This protein is one of the two subunits of integration host factor, a specific DNA-binding protein that functions in genetic recombination as well as in transcriptional and translational control. This Bordetella parapertussis (strain 12822 / ATCC BAA-587 / NCTC 13253) protein is Integration host factor subunit beta.